The sequence spans 620 residues: 1-deoxy-D-xylulose-5-phosphate synthase (620 aa).

Thiamine diphosphate contacts are provided by residues histidine 80 and 121-123; that span reads GHS. Aspartate 152 contacts Mg(2+). Thiamine diphosphate-binding positions include 153 to 154, asparagine 181, tyrosine 288, and glutamate 370; that span reads GA. Residue asparagine 181 coordinates Mg(2+).

The protein belongs to the transketolase family. DXPS subfamily. Homodimer. Mg(2+) serves as cofactor. Requires thiamine diphosphate as cofactor.

It catalyses the reaction D-glyceraldehyde 3-phosphate + pyruvate + H(+) = 1-deoxy-D-xylulose 5-phosphate + CO2. It participates in metabolic intermediate biosynthesis; 1-deoxy-D-xylulose 5-phosphate biosynthesis; 1-deoxy-D-xylulose 5-phosphate from D-glyceraldehyde 3-phosphate and pyruvate: step 1/1. In terms of biological role, catalyzes the acyloin condensation reaction between C atoms 2 and 3 of pyruvate and glyceraldehyde 3-phosphate to yield 1-deoxy-D-xylulose-5-phosphate (DXP). The polypeptide is 1-deoxy-D-xylulose-5-phosphate synthase (Shigella sonnei (strain Ss046)).